A 139-amino-acid chain; its full sequence is Endoribonuclease YbeY (139 aa).

The Zn(2+) site is built by His99, His103, and His109.

Belongs to the endoribonuclease YbeY family. Requires Zn(2+) as cofactor.

The protein localises to the cytoplasm. Single strand-specific metallo-endoribonuclease involved in late-stage 70S ribosome quality control and in maturation of the 3' terminus of the 16S rRNA. This Nautilia profundicola (strain ATCC BAA-1463 / DSM 18972 / AmH) protein is Endoribonuclease YbeY.